Consider the following 29-residue polypeptide: Cytochrome b6-f complex subunit 8 (29 aa).

The helical transmembrane segment at 3–23 threads the bilayer; the sequence is TVSLAWAALMVVFTFSLSLVV.

Belongs to the PetN family. The 4 large subunits of the cytochrome b6-f complex are cytochrome b6, subunit IV (17 kDa polypeptide, PetD), cytochrome f and the Rieske protein, while the 4 small subunits are PetG, PetL, PetM and PetN. The complex functions as a dimer.

The protein resides in the plastid. It is found in the chloroplast thylakoid membrane. In terms of biological role, component of the cytochrome b6-f complex, which mediates electron transfer between photosystem II (PSII) and photosystem I (PSI), cyclic electron flow around PSI, and state transitions. The chain is Cytochrome b6-f complex subunit 8 from Chloranthus spicatus (Chulantree).